Here is a 103-residue protein sequence, read N- to C-terminus: Large ribosomal subunit protein bL21 (103 aa).

The protein belongs to the bacterial ribosomal protein bL21 family. In terms of assembly, part of the 50S ribosomal subunit. Contacts protein L20.

In terms of biological role, this protein binds to 23S rRNA in the presence of protein L20. In Wigglesworthia glossinidia brevipalpis, this protein is Large ribosomal subunit protein bL21.